We begin with the raw amino-acid sequence, 439 residues long: Rhodopsin (439 aa).

Asn1 is a glycosylation site (N-linked (GlcNAc...) asparagine). Residues 1 to 26 (NETWWYNPYMDIHSHWKQFDQVPAAV) lie on the Extracellular side of the membrane. Residues 27-51 (YYSLGIFIAICGIIGCAGNGIVIYL) traverse the membrane as a helical segment. The Cytoplasmic segment spans residues 52–63 (FTKTKSLQTPAN). A helical transmembrane segment spans residues 64 to 90 (MFIINLAFSDFTFSLVNGFPMMTISCF). Over 91–102 (LKHWVFGQAACK) the chain is Extracellular. A disulfide bridge links Cys101 with Cys179. Residues 103–124 (VYGLIGGIFGLTSIMTMTMISI) traverse the membrane as a helical segment. The short motif at 125 to 127 (DRY) is the 'Ionic lock' involved in activated form stabilization element. Over 125-144 (DRYNVIRRPMSASKKMSHRK) the chain is Cytoplasmic. The chain crosses the membrane as a helical span at residues 145-165 (AFIMIVFVWIWSTIWAIGPIF). At 166-192 (GWGAYQLEGVLCNCSFDYITRDASTRS) the chain is on the extracellular side. Residues 193 to 217 (NIVCMYIFAFMFPIVVIFFCYFNIV) traverse the membrane as a helical segment. The Cytoplasmic segment spans residues 218 to 254 (MSVSNHEKEMAAMAKRLNAKELRKAQAGASAEMKLAK). A helical transmembrane segment spans residues 255-276 (ISIVIVTQSLLSWSPYAIVALL). Residues 277–286 (AQFGPIEWVT) lie on the Extracellular side of the membrane. The helical transmembrane segment at 287–308 (PYAAQLPVMFAKASAIHNPMIY) threads the bilayer. At Lys298 the chain carries N6-(retinylidene)lysine. Over 309–439 (SVSHPKFREA…PQAAPPQGVD (131 aa)) the chain is Cytoplasmic. S-palmitoyl cysteine attachment occurs at residues Cys329 and Cys330. A compositionally biased stretch (low complexity) spans 369 to 381 (MMQKMQAQQQQQP). The segment at 369-439 (MMQKMQAQQQ…PQAAPPQGVD (71 aa)) is disordered. Residues 382 to 433 (AYPPQGYPPQGYPPPPPQGYPPQGYPPQGYPPQGYPPPPQGPPPQGPPPQAA) are compositionally biased toward pro residues.

Belongs to the G-protein coupled receptor 1 family. Opsin subfamily. In terms of processing, contains one covalently linked retinal chromophore. Upon light absorption, the covalently bound 11-cis-retinal is converted to all-trans-retinal. After hydrolysis of the Schiff base and release of the covalently bound all-trans-retinal, active rhodopsin is regenerated by binding of a fresh molecule of 11-cis-retinal.

The protein localises to the cell projection. Its subcellular location is the rhabdomere membrane. Its function is as follows. Photoreceptor required for image-forming vision at low light intensity. Light-induced isomerization of 11-cis to all-trans retinal triggers a conformational change that activates signaling via G-proteins. Signaling mediates the activation of phospholipase C. Subsequent receptor phosphorylation mediates displacement of the bound G-protein alpha subunit by arrestin and terminates signaling. In Alloteuthis subulata (Squid), this protein is Rhodopsin (RHO).